The primary structure comprises 307 residues: Atrochrysone carboxyl ACP thioesterase (307 aa).

4 residues coordinate Zn(2+): His104, His106, Asp108, and His109. Catalysis depends on Asp108, which acts as the Proton donor/acceptor.

Belongs to the metallo-beta-lactamase superfamily. It depends on Zn(2+) as a cofactor.

It catalyses the reaction atrochrysone carboxyl-[ACP] + H2O = atrochrysone carboxylate + holo-[ACP] + H(+). It participates in secondary metabolite biosynthesis. In terms of biological role, atrochrysone carboxyl ACP thioesterase; part of the gene cluster that mediates the biosynthesis of monodictyphenone, a prenyl xanthone derivative. The pathway begins with the synthesis of atrochrysone thioester by the polyketide synthase (PKS) mdpG. The atrochrysone carboxyl ACP thioesterase mdpF then breaks the thioester bond and releases the atrochrysone carboxylic acid from mdpG. The atrochrysone carboxylic acid is then converted to atrochrysone which is further transformed into emodin anthrone. The next step is performed by the anthrone oxygenase mdpH that catalyzes the oxidation of emodinanthrone to emodin. Emodin is further modified to yield monodictyphenone via several steps involving mdpB, mdpC mdpJ, mdpK and mdpL. The short chain dehydrogenase mdpC converts the tautomers of emodin hydroquinone into the 3-hydroxy-3,4-dihydroan-thracen-1(2H)-one derivative. These enzymes with xptA, xptB and xptC are also proposed to be involved in the synthesis of shamixanthone from emodin. Especially, direct reduction of emodin by the short chain dehydrogenase mdpC followed by dehydration catalyzed by the scytalone dehydratase-like protein mdpB gives loss of oxygen and formation of chrysophanol intermediate in two simple steps. This Emericella nidulans (strain FGSC A4 / ATCC 38163 / CBS 112.46 / NRRL 194 / M139) (Aspergillus nidulans) protein is Atrochrysone carboxyl ACP thioesterase.